The chain runs to 584 residues: Complement component C8 alpha chain (584 aa).

Positions 1–20 (MFAVVFFILSLMTCQPGVTA) are cleaved as a signal peptide. Positions 21-30 (QEKVNQRVRR) are excised as a propeptide. The 54-residue stretch at 38-91 (TCQLSNWSEWTDCFPCQDKKYRHRSLLQPNKFGGTICSGDIWDQASCSSSTTCV) folds into the TSP type-1 1 domain. 7 cysteine pairs are disulfide-bonded: Cys39–Cys74, Cys50–Cys84, Cys53–Cys90, Cys96–Cys108, Cys102–Cys121, Cys115–Cys130, and Cys140–Cys177. C-linked (Man) tryptophan glycosylation occurs at Trp44. One can recognise an LDL-receptor class A domain in the interval 94–132 (AQCGQDFQCKETGRCLKRHLVCNGDQDCLDGSDEDDCED). Ca(2+) is bound by residues Leu113, Asn116, Asp118, Asp120, Asp126, and Glu127. In terms of domain architecture, MACPF spans 135-498 (AIDEDCSQYE…QYLMEFNACR (364 aa)). A run of 4 beta stranded transmembrane segments spans residues 248–256 (FGVTIGIGP), 259–266 (SPLLVGVG), 377–384 (GGSLGIQY), and 390–395 (VGGGLS). A disulfide bridge connects residues Cys375 and Cys399. Asn437 is a glycosylation site (N-linked (GlcNAc...) asparagine). 4 disulfides stabilise this stretch: Cys497-Cys544, Cys499-Cys515, Cys502-Cys517, and Cys519-Cys528. The 31-residue stretch at 499–529 (CGPCFNNGVPILEGTSCRCQCRLGSLGAACE) folds into the EGF-like domain. A TSP type-1 2 domain is found at 539 to 583 (DGSWSCWSSWSVCRAGIQERRRECDNPAPQNGGASCPGRKVQTQA). C-linked (Man) tryptophan glycosylation is found at Trp542, Trp545, and Trp548. 2 cysteine pairs are disulfide-bonded: Cys551-Cys584 and Cys562-Cys574. The segment at 562–584 (CDNPAPQNGGASCPGRKVQTQAC) is disordered.

This sequence belongs to the complement C6/C7/C8/C9 family. As to quaternary structure, heterotrimer of 3 chains: alpha (C8A), beta (C8B) and gamma (C8G); the alpha and gamma chains are disulfide bonded. Component of the membrane attack complex (MAC), composed of complement C5b, C6, C7, C8A, C8B, C8G and multiple copies of the pore-forming subunit C9.

It localises to the secreted. The protein resides in the target cell membrane. Membrane attack complex (MAC) assembly is inhibited by CD59, thereby protecting self-cells from damage during complement activation. CD59 acts by binding to the beta-haipins of C8 (C8A and C8B), forming an intermolecular beta-sheet that prevents incorporation of the multiple copies of C9 required for complete formation of the osmolytic pore. MAC assembly is also inhibited by clusterin (CLU) chaperones that inhibit polymerization of C9. Its function is as follows. Component of the membrane attack complex (MAC), a multiprotein complex activated by the complement cascade, which inserts into a target cell membrane and forms a pore, leading to target cell membrane rupture and cell lysis. The MAC is initiated by proteolytic cleavage of C5 into complement C5b in response to the classical, alternative, lectin and GZMK complement pathways. The complement pathways consist in a cascade of proteins that leads to phagocytosis and breakdown of pathogens and signaling that strengthens the adaptive immune system. C8A, together with C8B and C8G, inserts into the target membrane, but does not form pores by itself. During MAC assembly, associates with C5b, C6 and C7 to form the C5b8 intermediate complex that inserts into the target membrane and traverses the bilayer increasing membrane rigidity. In Homo sapiens (Human), this protein is Complement component C8 alpha chain.